We begin with the raw amino-acid sequence, 344 residues long: GTP 3',8-cyclase (344 aa).

The region spanning 19 to 244 (PFARPITYLR…TPLAERTGGP (226 aa)) is the Radical SAM core domain. Arginine 28 provides a ligand contact to GTP. [4Fe-4S] cluster contacts are provided by cysteine 35 and cysteine 39. Tyrosine 41 provides a ligand contact to S-adenosyl-L-methionine. Cysteine 42 serves as a coordination point for [4Fe-4S] cluster. Arginine 77 serves as a coordination point for GTP. Glycine 81 is a binding site for S-adenosyl-L-methionine. Threonine 110 is a binding site for GTP. Serine 134 is a binding site for S-adenosyl-L-methionine. Residue lysine 170 participates in GTP binding. Position 204 (methionine 204) interacts with S-adenosyl-L-methionine. Cysteine 268 and cysteine 271 together coordinate [4Fe-4S] cluster. 273–275 (RVR) provides a ligand contact to GTP. Position 285 (cysteine 285) interacts with [4Fe-4S] cluster.

The protein belongs to the radical SAM superfamily. MoaA family. Monomer and homodimer. [4Fe-4S] cluster is required as a cofactor.

It carries out the reaction GTP + AH2 + S-adenosyl-L-methionine = (8S)-3',8-cyclo-7,8-dihydroguanosine 5'-triphosphate + 5'-deoxyadenosine + L-methionine + A + H(+). It functions in the pathway cofactor biosynthesis; molybdopterin biosynthesis. Catalyzes the cyclization of GTP to (8S)-3',8-cyclo-7,8-dihydroguanosine 5'-triphosphate. The polypeptide is GTP 3',8-cyclase (Paracoccus denitrificans (strain Pd 1222)).